Here is a 517-residue protein sequence, read N- to C-terminus: Pentatricopeptide repeat-containing protein At5g42450, mitochondrial (517 aa).

The N-terminal 23 residues, methionine 1–leucine 23, are a transit peptide targeting the mitochondrion. PPR repeat units follow at residues aspartate 57–proline 91, asparagine 92–serine 126, asparagine 127–proline 157, asparagine 158–arginine 188, serine 189–isoleucine 223, asparagine 225–arginine 259, asparagine 261–glutamate 291, asparagine 294–proline 329, and glutamate 368–aspartate 398. A type E motif region spans residues phenylalanine 403 to arginine 478. The tract at residues aspartate 479–glutamate 509 is type E(+) motif.

The protein belongs to the PPR family. PCMP-E subfamily.

It is found in the mitochondrion. The sequence is that of Pentatricopeptide repeat-containing protein At5g42450, mitochondrial (PCMP-E102) from Arabidopsis thaliana (Mouse-ear cress).